The sequence spans 371 residues: Peptide chain release factor 2 (371 aa).

Residue glutamine 251 is modified to N5-methylglutamine.

This sequence belongs to the prokaryotic/mitochondrial release factor family. In terms of processing, methylated by PrmC. Methylation increases the termination efficiency of RF2.

Its subcellular location is the cytoplasm. In terms of biological role, peptide chain release factor 2 directs the termination of translation in response to the peptide chain termination codons UGA and UAA. This is Peptide chain release factor 2 from Arthrobacter sp. (strain FB24).